Reading from the N-terminus, the 266-residue chain is Small ribosomal subunit protein eS1 (266 aa).

Residues Gly233–Val266 form a disordered region. Over residues Ser244–Gly257 the composition is skewed to basic and acidic residues.

Belongs to the eukaryotic ribosomal protein eS1 family. Component of the small ribosomal subunit. Mature ribosomes consist of a small (40S) and a large (60S) subunit. The 40S subunit contains about 33 different proteins and 1 molecule of RNA (18S). The 60S subunit contains about 49 different proteins and 3 molecules of RNA (28S, 5.8S and 5S). Part of the small subunit (SSU) processome, composed of more than 70 proteins and the RNA chaperone small nucleolar RNA (snoRNA) U3.

The protein resides in the cytoplasm. Its subcellular location is the nucleus. The protein localises to the nucleolus. Its function is as follows. Component of the small ribosomal subunit. The ribosome is a large ribonucleoprotein complex responsible for the synthesis of proteins in the cell. Part of the small subunit (SSU) processome, first precursor of the small eukaryotic ribosomal subunit. During the assembly of the SSU processome in the nucleolus, many ribosome biogenesis factors, an RNA chaperone and ribosomal proteins associate with the nascent pre-rRNA and work in concert to generate RNA folding, modifications, rearrangements and cleavage as well as targeted degradation of pre-ribosomal RNA by the RNA exosome. May play a role during erythropoiesis. This Salmo salar (Atlantic salmon) protein is Small ribosomal subunit protein eS1 (rps3a).